Here is a 71-residue protein sequence, read N- to C-terminus: Probable ribosome maturation protein RlbA (71 aa).

One can recognise an S4 RNA-binding domain in the interval 12–69 (ITLGQFLKLADVIQSGGMAKWFLSEHEVLVNDEPDNRRGRKLYVGDVVEIEGFGSFQV).

May assist in the assembly of the 50S subunit. This is Probable ribosome maturation protein RlbA from Bacillus subtilis (strain 168).